The primary structure comprises 464 residues: Na(+)/H(+) antiporter NhaA 2 (464 aa).

11 helical membrane-spanning segments follow: residues 53–73 (VGGI…NSPW), 96–116 (LTLG…VVGL), 134–154 (ALPI…FVLV), 165–185 (GWAI…AVIS), 195–215 (FLLT…AVFY), 219–239 (IKAW…VCAQ), 257–277 (VLVH…GFAV), 313–333 (IAIP…LSGL), 340–360 (PITL…ILVT), 378–398 (WVDV…SLLI), and 412–432 (FVKI…AIVL).

The protein belongs to the NhaA Na(+)/H(+) (TC 2.A.33) antiporter family.

The protein resides in the cell membrane. It catalyses the reaction Na(+)(in) + 2 H(+)(out) = Na(+)(out) + 2 H(+)(in). In terms of biological role, na(+)/H(+) antiporter that extrudes sodium in exchange for external protons. The sequence is that of Na(+)/H(+) antiporter NhaA 2 from Mycolicibacterium vanbaalenii (strain DSM 7251 / JCM 13017 / BCRC 16820 / KCTC 9966 / NRRL B-24157 / PYR-1) (Mycobacterium vanbaalenii).